The chain runs to 119 residues: Non-specific lipid-transfer protein 3 (119 aa).

An N-terminal signal peptide occupies residues 1–24 (MARSMKLACVVLAMCMLVAPMAEA). Intrachain disulfides connect C28-C77, C38-C54, C55-C100, and C75-C114.

It belongs to the plant LTP family. As to expression, expressed in roots, stem, leaves and tendrils of the mature plant.

In terms of biological role, plant non-specific lipid-transfer proteins transfer phospholipids as well as galactolipids across membranes. May play a role in wax or cutin deposition in the cell walls of expanding epidermal cells and certain secretory tissues. The polypeptide is Non-specific lipid-transfer protein 3 (Pisum sativum (Garden pea)).